We begin with the raw amino-acid sequence, 304 residues long: Coenzyme PQQ synthesis protein B (304 aa).

It belongs to the PqqB family.

It participates in cofactor biosynthesis; pyrroloquinoline quinone biosynthesis. In terms of biological role, may be involved in the transport of PQQ or its precursor to the periplasm. The protein is Coenzyme PQQ synthesis protein B of Pseudomonas aeruginosa (strain ATCC 15692 / DSM 22644 / CIP 104116 / JCM 14847 / LMG 12228 / 1C / PRS 101 / PAO1).